Consider the following 22-residue polypeptide: Short-chain-enoyl-CoA hydratase (22 aa).

This sequence belongs to the enoyl-CoA hydratase/isomerase family.

The catalysed reaction is a short-chain (3S)-3-hydroxyacyl-CoA = a short-chain (2E)-enoyl-CoA + H2O. It functions in the pathway lipid metabolism; butanoate metabolism. The sequence is that of Short-chain-enoyl-CoA hydratase (crt) from Clostridium pasteurianum.